The primary structure comprises 343 residues: Phosphate acyltransferase (343 aa).

Belongs to the PlsX family. Homodimer. Probably interacts with PlsY.

The protein resides in the cytoplasm. It catalyses the reaction a fatty acyl-[ACP] + phosphate = an acyl phosphate + holo-[ACP]. The protein operates within lipid metabolism; phospholipid metabolism. Functionally, catalyzes the reversible formation of acyl-phosphate (acyl-PO(4)) from acyl-[acyl-carrier-protein] (acyl-ACP). This enzyme utilizes acyl-ACP as fatty acyl donor, but not acyl-CoA. The chain is Phosphate acyltransferase from Coxiella burnetii (strain CbuG_Q212) (Coxiella burnetii (strain Q212)).